Reading from the N-terminus, the 385-residue chain is Protein pelota homolog (385 aa).

Residue Lys162 forms a Glycyl lysine isopeptide (Lys-Gly) (interchain with G-Cter in SUMO2) linkage. Ser374, Ser380, Ser381, and Ser382 each carry phosphoserine.

It belongs to the eukaryotic release factor 1 family. Pelota subfamily. Component of the Pelota-HBS1L complex, also named Dom34-Hbs1 complex, composed of PELO and HBS1L. Interacts with PINK1. Interacts with ABCE1. Interacts with CNOT4. Requires a divalent metal cation as cofactor.

The protein resides in the cytoplasm. Functionally, component of the Pelota-HBS1L complex, a complex that recognizes stalled ribosomes and triggers the No-Go Decay (NGD) pathway. In the Pelota-HBS1L complex, PELO recognizes ribosomes stalled at the 3' end of an mRNA and engages stalled ribosomes by destabilizing mRNA in the mRNA channel. Following mRNA extraction from stalled ribosomes by the SKI complex, the Pelota-HBS1L complex promotes recruitment of ABCE1, which drives the disassembly of stalled ribosomes, followed by degradation of damaged mRNAs as part of the NGD pathway. As part of the PINK1-regulated signaling, upon mitochondrial damage is recruited to the ribosome/mRNA-ribonucleoprotein complex associated to mitochondrial outer membrane thereby enabling the recruitment of autophagy receptors and induction of mitophagy. In Rattus norvegicus (Rat), this protein is Protein pelota homolog (Pelo).